The chain runs to 418 residues: CinA-like protein (418 aa).

The protein belongs to the CinA family.

This chain is CinA-like protein, found in Leptospira interrogans serogroup Icterohaemorrhagiae serovar Lai (strain 56601).